Here is a 373-residue protein sequence, read N- to C-terminus: Anhydro-N-acetylmuramic acid kinase (373 aa).

Gly12–Asp19 serves as a coordination point for ATP.

The protein belongs to the anhydro-N-acetylmuramic acid kinase family.

The catalysed reaction is 1,6-anhydro-N-acetyl-beta-muramate + ATP + H2O = N-acetyl-D-muramate 6-phosphate + ADP + H(+). It participates in amino-sugar metabolism; 1,6-anhydro-N-acetylmuramate degradation. The protein operates within cell wall biogenesis; peptidoglycan recycling. Catalyzes the specific phosphorylation of 1,6-anhydro-N-acetylmuramic acid (anhMurNAc) with the simultaneous cleavage of the 1,6-anhydro ring, generating MurNAc-6-P. Is required for the utilization of anhMurNAc either imported from the medium or derived from its own cell wall murein, and thus plays a role in cell wall recycling. This Salmonella paratyphi A (strain ATCC 9150 / SARB42) protein is Anhydro-N-acetylmuramic acid kinase.